Consider the following 128-residue polypeptide: Lymphocyte antigen 6D (128 aa).

An N-terminal signal peptide occupies residues 1 to 20 (MKTVLLFLVALAAAAGPAQA). In terms of domain architecture, UPAR/Ly6 spans 21 to 108 (LRCHVCTSSS…WQSAAPARTS (88 aa)). Cystine bridges form between Cys-23–Cys-45, Cys-26–Cys-32, Cys-38–Cys-63, Cys-67–Cys-86, and Cys-87–Cys-92. Residue Ser-98 is the site of GPI-anchor amidated serine attachment. The propeptide at 99–128 (WQSAAPARTSAHLGLALACGLLALLWAPGL) is removed in mature form.

The protein localises to the cell membrane. Functionally, may act as a specification marker at earliest stage specification of lymphocytes between B- and T-cell development. Marks the earliest stage of B-cell specification. The sequence is that of Lymphocyte antigen 6D (LY6D) from Bos taurus (Bovine).